Consider the following 317-residue polypeptide: Apolipoprotein E (317 aa).

The first 18 residues, 1-18 (MRVLWVALVVTLLAGCRT), serve as a signal peptide directing secretion. 8 tandem repeats follow at residues 79–100 (ELIE…AQLG), 101–122 (PVTQ…ARVG), 123–144 (ADME…NMLG), 145–166 (QTTE…KRLV), 167–188 (RDTE…EGAE), 189–210 (RSVS…LRAA), 211–232 (TLST…QKLR), and 233–254 (GRLE…DELE). An 8 X 22 AA approximate tandem repeats region spans residues 79-254 (ELIEESMKEV…RLDEMRDELE (176 aa)). The residue at position 142 (methionine 142) is a Methionine sulfoxide. The tract at residues 157–167 (HLRNVRKRLVR) is LDL and other lipoprotein receptors binding. 161–164 (VRKR) contacts heparin. The tract at residues 209–289 (AATLSTRAGQ…GWFEPLVEDM (81 aa)) is lipid-binding and lipoprotein association. 228–235 (GQKLRGRL) provides a ligand contact to heparin. The interval 265–317 (SQLRLQAEAFQARLKGWFEPLVEDMRRQWAGLVERMQSAVSISSSTSAPSDNQ) is homooligomerization. The tract at residues 277–289 (RLKGWFEPLVEDM) is specificity for association with VLDL.

Belongs to the apolipoprotein A1/A4/E family. As to quaternary structure, homotetramer. May interact with ABCA1; functionally associated with ABCA1 in the biogenesis of HDLs. May interact with APP/A4 amyloid-beta peptide; the interaction is extremely stable in vitro but its physiological significance is unclear. May interact with MAPT. May interact with MAP2. In the cerebrospinal fluid, interacts with secreted SORL1. Interacts with PMEL; this allows the loading of PMEL luminal fragment on ILVs to induce fibril nucleation. APOE exists as multiple glycosylated and sialylated glycoforms within cells and in plasma. The extent of glycosylation and sialylation are tissue and context specific. In terms of processing, glycated in plasma VLDL. Post-translationally, phosphorylated by FAM20C in the extracellular medium.

It is found in the secreted. It localises to the extracellular space. The protein localises to the extracellular matrix. The protein resides in the extracellular vesicle. Its subcellular location is the endosome. It is found in the multivesicular body. Its function is as follows. APOE is an apolipoprotein, a protein associating with lipid particles, that mainly functions in lipoprotein-mediated lipid transport between organs via the plasma and interstitial fluids. APOE is a core component of plasma lipoproteins and is involved in their production, conversion and clearance. Apolipoproteins are amphipathic molecules that interact both with lipids of the lipoprotein particle core and the aqueous environment of the plasma. As such, APOE associates with chylomicrons, chylomicron remnants, very low density lipoproteins (VLDL) and intermediate density lipoproteins (IDL) but shows a preferential binding to high-density lipoproteins (HDL). It also binds a wide range of cellular receptors including the LDL receptor/LDLR and the very low-density lipoprotein receptor/VLDLR that mediate the cellular uptake of the APOE-containing lipoprotein particles. Finally, APOE also has a heparin-binding activity and binds heparan-sulfate proteoglycans on the surface of cells, a property that supports the capture and the receptor-mediated uptake of APOE-containing lipoproteins by cells. The chain is Apolipoprotein E (APOE) from Sus scrofa (Pig).